We begin with the raw amino-acid sequence, 319 residues long: tRNA uridine(34) hydroxylase (319 aa).

The region spanning 124–218 (LDEDTVILDA…YGKNEETKGE (95 aa)) is the Rhodanese domain. The active-site Cysteine persulfide intermediate is cysteine 178.

The protein belongs to the TrhO family.

The catalysed reaction is uridine(34) in tRNA + AH2 + O2 = 5-hydroxyuridine(34) in tRNA + A + H2O. Its function is as follows. Catalyzes oxygen-dependent 5-hydroxyuridine (ho5U) modification at position 34 in tRNAs. This chain is tRNA uridine(34) hydroxylase, found in Listeria monocytogenes serotype 4b (strain CLIP80459).